The chain runs to 345 residues: Isopentenyl-diphosphate delta-isomerase (345 aa).

6-7 (RK) is a binding site for substrate. FMN contacts are provided by residues 63 to 65 (SMT), serine 93, and asparagine 122. 93–95 (SQR) contacts substrate. Residue glutamine 156 coordinates substrate. Glutamate 157 lines the Mg(2+) pocket. FMN contacts are provided by residues lysine 188, threonine 218, 265–267 (GLR), and 286–287 (AL).

Belongs to the IPP isomerase type 2 family. In terms of assembly, homooctamer. Dimer of tetramers. FMN serves as cofactor. The cofactor is NADPH. Mg(2+) is required as a cofactor.

The protein localises to the cytoplasm. The catalysed reaction is isopentenyl diphosphate = dimethylallyl diphosphate. In terms of biological role, involved in the biosynthesis of isoprenoids. Catalyzes the 1,3-allylic rearrangement of the homoallylic substrate isopentenyl (IPP) to its allylic isomer, dimethylallyl diphosphate (DMAPP). The polypeptide is Isopentenyl-diphosphate delta-isomerase (Archaeoglobus fulgidus (strain ATCC 49558 / DSM 4304 / JCM 9628 / NBRC 100126 / VC-16)).